The sequence spans 75 residues: Exodeoxyribonuclease 7 small subunit (75 aa).

This sequence belongs to the XseB family. In terms of assembly, heterooligomer composed of large and small subunits.

Its subcellular location is the cytoplasm. The enzyme catalyses Exonucleolytic cleavage in either 5'- to 3'- or 3'- to 5'-direction to yield nucleoside 5'-phosphates.. Its function is as follows. Bidirectionally degrades single-stranded DNA into large acid-insoluble oligonucleotides, which are then degraded further into small acid-soluble oligonucleotides. The polypeptide is Exodeoxyribonuclease 7 small subunit (Clostridium perfringens (strain ATCC 13124 / DSM 756 / JCM 1290 / NCIMB 6125 / NCTC 8237 / Type A)).